Consider the following 360-residue polypeptide: MLVWLAEYLTQFESAFNVFSYLTLRAILSVLTALVLSLWLGPTLIRRLQRLQIGQTVRDDGPESHLVKSGTPTMGGVLILAAVLGSSLLWADLDNRYVWVVLLVTTGFGIVGFVDDYRKVVRKDPKGLIAKWKYFWQSVIASVAAVYLYWSSTQGAETALLVPFFKDVMPQLGMLYMLMAYFVIVGTSNAVNLTDGLDGLAIMPTIMVAAALGIFAYVSGNVNFAEYLQIPYLPLTAELLVVCTAIVGAGLGFLWFNTYPALVFMGDVGSLALGAALGIIAILVRQELVLFIMGGVFVMETLSVMLQVGSYKLRGKRVFRMAPIHHHYELKGWPEPRVIVRFWILSLIFVLIGLATLKLR.

The next 10 helical transmembrane spans lie at 25-45 (RAIL…PTLI), 73-93 (TMGG…WADL), 97-117 (YVWV…VDDY), 128-148 (LIAK…AVYL), 168-188 (VMPQ…VGTS), 199-219 (GLAI…AYVS), 236-256 (TAEL…FLWF), 262-282 (LVFM…IIAI), 288-308 (LVLF…MLQV), and 338-358 (VIVR…ATLK).

This sequence belongs to the glycosyltransferase 4 family. MraY subfamily. The cofactor is Mg(2+).

It is found in the cell inner membrane. The enzyme catalyses UDP-N-acetyl-alpha-D-muramoyl-L-alanyl-gamma-D-glutamyl-meso-2,6-diaminopimeloyl-D-alanyl-D-alanine + di-trans,octa-cis-undecaprenyl phosphate = di-trans,octa-cis-undecaprenyl diphospho-N-acetyl-alpha-D-muramoyl-L-alanyl-D-glutamyl-meso-2,6-diaminopimeloyl-D-alanyl-D-alanine + UMP. The protein operates within cell wall biogenesis; peptidoglycan biosynthesis. In terms of biological role, catalyzes the initial step of the lipid cycle reactions in the biosynthesis of the cell wall peptidoglycan: transfers peptidoglycan precursor phospho-MurNAc-pentapeptide from UDP-MurNAc-pentapeptide onto the lipid carrier undecaprenyl phosphate, yielding undecaprenyl-pyrophosphoryl-MurNAc-pentapeptide, known as lipid I. This chain is Phospho-N-acetylmuramoyl-pentapeptide-transferase, found in Idiomarina loihiensis (strain ATCC BAA-735 / DSM 15497 / L2-TR).